We begin with the raw amino-acid sequence, 172 residues long: Ribosome maturation factor RimM (172 aa).

Positions 96-168 (DGEFYYHEII…RVDVEIPEGL (73 aa)) constitute a PRC barrel domain.

This sequence belongs to the RimM family. As to quaternary structure, binds ribosomal protein uS19.

The protein localises to the cytoplasm. An accessory protein needed during the final step in the assembly of 30S ribosomal subunit, possibly for assembly of the head region. Essential for efficient processing of 16S rRNA. May be needed both before and after RbfA during the maturation of 16S rRNA. It has affinity for free ribosomal 30S subunits but not for 70S ribosomes. The chain is Ribosome maturation factor RimM from Streptococcus sanguinis (strain SK36).